The chain runs to 151 residues: UPF0178 protein PST_0536 (151 aa).

This sequence belongs to the UPF0178 family.

The polypeptide is UPF0178 protein PST_0536 (Stutzerimonas stutzeri (strain A1501) (Pseudomonas stutzeri)).